Here is a 292-residue protein sequence, read N- to C-terminus: tRNA pseudouridine synthase B (292 aa).

The active-site Nucleophile is Asp38.

This sequence belongs to the pseudouridine synthase TruB family. Type 1 subfamily.

It catalyses the reaction uridine(55) in tRNA = pseudouridine(55) in tRNA. Functionally, responsible for synthesis of pseudouridine from uracil-55 in the psi GC loop of transfer RNAs. This Streptococcus pneumoniae serotype 2 (strain D39 / NCTC 7466) protein is tRNA pseudouridine synthase B.